Reading from the N-terminus, the 334-residue chain is Sulfhydrogenase 2 subunit beta (334 aa).

4Fe-4S ferredoxin-type domains are found at residues 220–250 and 294–328; these read KVWK…VCDT and CKNY…VLDE. [4Fe-4S] cluster-binding residues include cysteine 229, cysteine 232, cysteine 235, cysteine 239, cysteine 306, cysteine 309, cysteine 312, and cysteine 316.

In terms of assembly, dimer of heterotetramer of alpha, beta, gamma and delta subunits. The nickel-containing alpha and delta subunits constitute the hydrogenase activity. The beta and gamma subunits (flavin-containing dimer) constitute the sulfur reductase activity. [4Fe-4S] cluster serves as cofactor.

It localises to the cytoplasm. It catalyses the reaction n sulfur + H2 = (n-1) sulfur + hydrogen sulfide + H(+). Part of a bifunctional enzyme complex that functions as a hydrogen-evolving hydrogenase with sulfur-reducing activity. May play a role in hydrogen cycling during fermentative growth. Activity exhibited with NAD in addition to NADPH. The beta and gamma subunits form the sulfur-reducing component that catalyzes the cytoplasmic production of hydrogen sulfide in the presence of elemental sulfur. This is Sulfhydrogenase 2 subunit beta from Pyrococcus furiosus (strain ATCC 43587 / DSM 3638 / JCM 8422 / Vc1).